Reading from the N-terminus, the 256-residue chain is Imidazole glycerol phosphate synthase subunit HisF (256 aa).

Residues Asp-12 and Asp-131 contribute to the active site.

It belongs to the HisA/HisF family. Heterodimer of HisH and HisF.

Its subcellular location is the cytoplasm. It carries out the reaction 5-[(5-phospho-1-deoxy-D-ribulos-1-ylimino)methylamino]-1-(5-phospho-beta-D-ribosyl)imidazole-4-carboxamide + L-glutamine = D-erythro-1-(imidazol-4-yl)glycerol 3-phosphate + 5-amino-1-(5-phospho-beta-D-ribosyl)imidazole-4-carboxamide + L-glutamate + H(+). It functions in the pathway amino-acid biosynthesis; L-histidine biosynthesis; L-histidine from 5-phospho-alpha-D-ribose 1-diphosphate: step 5/9. Functionally, IGPS catalyzes the conversion of PRFAR and glutamine to IGP, AICAR and glutamate. The HisF subunit catalyzes the cyclization activity that produces IGP and AICAR from PRFAR using the ammonia provided by the HisH subunit. This is Imidazole glycerol phosphate synthase subunit HisF from Pseudomonas putida (strain GB-1).